A 402-amino-acid chain; its full sequence is Alkaline proteinase (402 aa).

The N-terminal stretch at 1 to 20 (MVTLRRLAVLLGAIPAALAA) is a signal peptide. Residues 21 to 120 (PTTQKREVVP…EQDEGEFSTA (100 aa)) constitute a propeptide that is removed on maturation. The region spanning 32 to 108 (KYIVTLKEGA…EVEEDQIWHL (77 aa)) is the Inhibitor I9 domain. Residues 128-402 (AWGLGTISHR…NRILYNGNGA (275 aa)) form the Peptidase S8 domain. Residues D160, H191, and S347 each act as charge relay system in the active site. A compositionally biased stretch (polar residues) spans 382–392 (GRVSNPGSGSP). The tract at residues 382 to 402 (GRVSNPGSGSPNRILYNGNGA) is disordered.

Belongs to the peptidase S8 family.

This chain is Alkaline proteinase (ALP), found in Hapsidospora chrysogena (Acremonium chrysogenum).